The primary structure comprises 163 residues: Iron-sulfur cluster assembly protein 2 (163 aa).

Residues 1 to 48 (MMMLRQTSRKAYLGLQASPLGLGRRLYHENVIDHFENPRNVGSFNRND) constitute a mitochondrion transit peptide.

It belongs to the NifU family. As to quaternary structure, component of the core Fe-S cluster (ISC) assembly machinery. It depends on [2Fe-2S] cluster as a cofactor. As to expression, mostly expressed in leaves, pollen and flowers.

It localises to the mitochondrion matrix. The protein operates within cofactor biosynthesis; iron-sulfur cluster biosynthesis. In terms of biological role, scaffold protein for the de novo synthesis of iron-sulfur (Fe-S) clusters within mitochondria, which is required for maturation of both mitochondrial and cytoplasmic [2Fe-2S] and [4Fe-4S] proteins. First, a [2Fe-2S] cluster is transiently assembled on the scaffold protein ISCU (ISU1, ISU2 or ISU3). In a second step, the cluster is released from ISCU, transferred to a glutaredoxin, followed by the formation of mitochondrial [2Fe-2S] proteins, the synthesis of [4Fe-4S] clusters and their target-specific insertion into the recipient apoproteins. Cluster assembly on ISCU depends on the function of the cysteine desulfurase complex NFS1-ISD11, which serves as the sulfur donor for cluster synthesis, the iron-binding protein frataxin as the putative iron donor, and the electron transfer chain comprised of ferredoxin reductase and ferredoxin, which receive their electrons from NADH. The protein is Iron-sulfur cluster assembly protein 2 (ISU2) of Arabidopsis thaliana (Mouse-ear cress).